The chain runs to 669 residues: PAN2-PAN3 deadenylation complex subunit PAN3 (669 aa).

Polar residues predominate over residues 1–10 (MATTFGSPSG). The interval 1-25 (MATTFGSPSGDSRRGVASPRPKGRE) is disordered. The C3H1-type zinc-finger motif lies at 25-54 (EAKNTFCRNVTIYGHCRYENSKCRPPHLPD). The segment at 247-519 (QVMPNSTLPV…DIDNFLGGIS (273 aa)) is pseudokinase domain. ATP is bound by residues Arg-298, 347–354 (DYHPNSKS), and 408–409 (SK). Residues 520-558 (DQLASVFDSELHAQDTLTNTLGRELESSRIVRLLVKLNM) adopt a coiled-coil conformation. Residues 559–669 (VNERPELDAS…LIRAGRGQGK (111 aa)) are knob domain.

It belongs to the protein kinase superfamily. PAN3 family. Homodimer. Forms a heterotrimer with a catalytic subunit PAN2 to form the poly(A)-nuclease (PAN) deadenylation complex. Interacts (via PAM-2 motif) with poly(A)-binding protein PAB1 (via PABC domain), conferring substrate specificity of the enzyme complex.

The protein localises to the cytoplasm. Its function is as follows. Regulatory subunit of the poly(A)-nuclease (PAN) deadenylation complex, one of two cytoplasmic mRNA deadenylases involved in mRNA turnover. PAN specifically shortens poly(A) tails of RNA and the activity is stimulated by poly(A)-binding protein PAB1. PAN deadenylation is followed by rapid degradation of the shortened mRNA tails by the CCR4-NOT complex. Deadenylated mRNAs are then degraded by two alternative mechanisms, namely exosome-mediated 3'-5' exonucleolytic degradation, or deadenylation-dependent mRNA decaping and subsequent 5'-3' exonucleolytic degradation by XRN1. May also be involved in post-transcriptional maturation of mRNA poly(A) tails. PAN3 acts as a positive regulator for PAN activity, recruiting the catalytic subunit PAN2 to mRNA via its interaction with RNA and with PAB1. The chain is PAN2-PAN3 deadenylation complex subunit PAN3 from Phaeosphaeria nodorum (strain SN15 / ATCC MYA-4574 / FGSC 10173) (Glume blotch fungus).